The chain runs to 385 residues: Lipid-A-disaccharide synthase 2 (385 aa).

Belongs to the LpxB family.

The enzyme catalyses a lipid X + a UDP-2-N,3-O-bis[(3R)-3-hydroxyacyl]-alpha-D-glucosamine = a lipid A disaccharide + UDP + H(+). It functions in the pathway bacterial outer membrane biogenesis; LPS lipid A biosynthesis. In terms of biological role, condensation of UDP-2,3-diacylglucosamine and 2,3-diacylglucosamine-1-phosphate to form lipid A disaccharide, a precursor of lipid A, a phosphorylated glycolipid that anchors the lipopolysaccharide to the outer membrane of the cell. The chain is Lipid-A-disaccharide synthase 2 from Legionella pneumophila (strain Paris).